We begin with the raw amino-acid sequence, 82 residues long: RNA-binding protein Hfq (82 aa).

The region spanning 11 to 71 is the Sm domain; it reads DTFLNHVRKT…ISTIMPGAPI (61 aa).

This sequence belongs to the Hfq family. In terms of assembly, homohexamer.

RNA chaperone that binds small regulatory RNA (sRNAs) and mRNAs to facilitate mRNA translational regulation in response to envelope stress, environmental stress and changes in metabolite concentrations. Also binds with high specificity to tRNAs. The protein is RNA-binding protein Hfq of Rhodopseudomonas palustris (strain TIE-1).